Here is a 238-residue protein sequence, read N- to C-terminus: Probable transcriptional regulatory protein STER_0242 (238 aa).

It belongs to the TACO1 family. YeeN subfamily.

Its subcellular location is the cytoplasm. This is Probable transcriptional regulatory protein STER_0242 from Streptococcus thermophilus (strain ATCC BAA-491 / LMD-9).